Here is a 34-residue protein sequence, read N- to C-terminus: ALWKDVLKKIGTVALHAGKAAFGAAADTISQGGS.

As to expression, expressed by the skin glands.

Its subcellular location is the secreted. Its function is as follows. Has antimicrobial activity. The protein is Dermaseptin-H5 of Pithecopus hypochondrialis (Orange-legged leaf frog).